Reading from the N-terminus, the 371-residue chain is Cysteine proteinase EP-B 1 (371 aa).

Positions methionine 1–alanine 28 are cleaved as a signal peptide. Residues isoleucine 29–aspartate 133 constitute a propeptide, activation peptide. Asparagine 130 is a glycosylation site (N-linked (GlcNAc...) asparagine). Cystine bridges form between cysteine 155/cysteine 197, cysteine 189/cysteine 230, and cysteine 291/cysteine 343. The active site involves cysteine 158. Residues histidine 297 and asparagine 318 contribute to the active site.

It belongs to the peptidase C1 family.

The protein is Cysteine proteinase EP-B 1 of Hordeum vulgare (Barley).